The sequence spans 23 residues: Paralytic peptide 2 (23 aa).

Residues Cys7 and Cys19 are joined by a disulfide bond.

This sequence belongs to the GBP/PSP1/paralytic peptide family. As to expression, hemolymph.

Causes rapid, rigid paralysis when injected into Lepidopteran larvae. The physiological role may be to reduce hemolymph loss following injury and promote wound healing. The sequence is that of Paralytic peptide 2 from Spodoptera exigua (Beet armyworm).